Reading from the N-terminus, the 86-residue chain is uncharacterized protein (86 aa).

The tract at residues 1–21 (MLSNSTSRNRHSKHNKKNTRE) is disordered. Basic residues predominate over residues 8 to 17 (RNRHSKHNKK).

This is an uncharacterized protein from Acidianus convivator (ATV).